A 678-amino-acid polypeptide reads, in one-letter code: RAS guanyl-releasing protein 4 (678 aa).

Basic residues-rich tracts occupy residues 1–10 (MNRKDIKRKS) and 20–32 (GHGR…RHKT). 2 disordered regions span residues 1–33 (MNRK…HKTC) and 165–185 (GDAS…MSSP). In terms of domain architecture, N-terminal Ras-GEF spans 49 to 175 (GVLSESSCSV…DASNLLSPGG (127 aa)). In terms of domain architecture, Ras-GEF spans 201–432 (ETEELAQHLT…YELSYAREPR (232 aa)). The region spanning 466-501 (HVEQLVESVFKNYDPEGHGSISLEDFEKLSANFPFA) is the EF-hand domain. The Phorbol-ester/DAG-type zinc finger occupies 540 to 595 (LHAFQEVTFRKPTFCHSCNGFVSTGPLWGVTKRGYRCQDCGLCCHRHCRDQVRVEC). 2 disordered regions span residues 598–620 (RPET…LPPT) and 651–678 (SSHS…KSSV). Pro residues predominate over residues 605 to 619 (PGPPGAPGPATPLPP).

The protein belongs to the RASGRP family. Expressed by mast cells and their progenitors (at protein level).

The protein localises to the cytoplasm. It is found in the cell membrane. Its function is as follows. Functions as a cation- and diacylglycerol (DAG)-regulated nucleotide exchange factor activating Ras through the exchange of bound GDP for GTP. In neutrophils, participates in a phospholipase C-activating N-formyl peptide-activated GPCR (G protein-coupled receptor) signaling pathway by promoting Ras-mediated activation of PIK3CG/PI3Kgamma to promote neutrophil functional responses. In CD117(+) dendritic cells and mast cells, participates in an lipopolysaccharide (LPS)-activated signaling pathway that stimulates the production of interferon-gamma and other pro-inflammatory cytokines by natural killer (NK) cells. May function in mast cell differentiation. Does not appear to be required for the development of B-cells, DC-cells, T-cells, or NK-cells. The chain is RAS guanyl-releasing protein 4 (Rasgrp4) from Rattus norvegicus (Rat).